The sequence spans 145 residues: uncharacterized protein (145 aa).

Transmembrane regions (helical) follow at residues 20 to 40 (LIGP…GMFF) and 116 to 136 (MIML…VLSA).

It is found in the membrane. This is an uncharacterized protein from Saccharomyces cerevisiae (strain ATCC 204508 / S288c) (Baker's yeast).